The following is a 100-amino-acid chain: MTADDFIETSERSATAEEGARARANFRLVSLAFQKETDSSLFLTLSQCHIELGGLEKHCRGRIERKRGREALRLGPGTKYNCPFPIVSRLDSVSLLFEED.

This is an uncharacterized protein from Caenorhabditis elegans.